The following is a 131-amino-acid chain: MALWLTVVIALTCLGGLASPSPVTPSPTLKELIEELVNITQNQASLCNGSMVWSVNLTAGMYCAALESLINVSDCSAIQRTQRMLKALCSQKPAAGQISSERSRDTKIEVIQLVKNLLTYVRGVYRHGNFR.

A signal peptide spans 1 to 18; sequence MALWLTVVIALTCLGGLA. Residues Asn-38, Asn-48, Asn-56, and Asn-71 are each glycosylated (N-linked (GlcNAc...) asparagine). 2 cysteine pairs are disulfide-bonded: Cys-47–Cys-75 and Cys-63–Cys-89.

Belongs to the IL-4/IL-13 family. As to quaternary structure, interacts with IL13RA2.

Its subcellular location is the secreted. In terms of biological role, cytokine that plays important roles in allergic inflammation and immune response to parasite infection. Synergizes with IL2 in regulating interferon-gamma synthesis. Stimulates B-cell proliferation, and activation of eosinophils, basophils, and mast cells. Plays an important role in controlling IL33 activity by modulating the production of transmembrane and soluble forms of interleukin-1 receptor-like 1/IL1RL1. Displays the capacity to antagonize Th1-driven proinflammatory immune response and downregulates synthesis of many proinflammatory cytokines including IL1, IL6, IL10, IL12 and TNF-alpha through a mechanism that partially involves suppression of NF-kappa-B. Also functions on nonhematopoietic cells, including endothelial cells where it induces vascular cell adhesion protein 1/VCAM1, which is important in the recruitment of eosinophils. Exerts its biological effects through its receptors which comprises the IL4R chain and the IL13RA1 chain, to activate JAK1 and TYK2, leading to the activation of STAT6. Aside from IL13RA1, another receptor IL13RA2 acts as a high affinity decoy for IL13 and mediates internalization and depletion of extracellular IL13. This Canis lupus familiaris (Dog) protein is Interleukin-13 (IL13).